Consider the following 596-residue polypeptide: Elongation factor 4 (596 aa).

The 182-residue stretch at 2-183 (ENIRNFSIIA…AIIERIPAPS (182 aa)) folds into the tr-type G domain. GTP contacts are provided by residues 14-19 (DHGKST) and 130-133 (NKID).

The protein belongs to the TRAFAC class translation factor GTPase superfamily. Classic translation factor GTPase family. LepA subfamily.

The protein localises to the cell inner membrane. The catalysed reaction is GTP + H2O = GDP + phosphate + H(+). Its function is as follows. Required for accurate and efficient protein synthesis under certain stress conditions. May act as a fidelity factor of the translation reaction, by catalyzing a one-codon backward translocation of tRNAs on improperly translocated ribosomes. Back-translocation proceeds from a post-translocation (POST) complex to a pre-translocation (PRE) complex, thus giving elongation factor G a second chance to translocate the tRNAs correctly. Binds to ribosomes in a GTP-dependent manner. This Nitratiruptor sp. (strain SB155-2) protein is Elongation factor 4.